Reading from the N-terminus, the 149-residue chain is Transcriptional regulator MraZ (149 aa).

2 consecutive SpoVT-AbrB domains span residues 6–52 (RSHR…PLPD) and 81–124 (AELM…DQGR).

Belongs to the MraZ family. In terms of assembly, forms oligomers.

It localises to the cytoplasm. It is found in the nucleoid. This chain is Transcriptional regulator MraZ, found in Nitratidesulfovibrio vulgaris (strain DSM 19637 / Miyazaki F) (Desulfovibrio vulgaris).